The sequence spans 155 residues: Ribonuclease H (155 aa).

Positions M1–M142 constitute an RNase H type-1 domain. Residues D10, E48, D70, and D134 each coordinate Mg(2+).

Belongs to the RNase H family. As to quaternary structure, monomer. Mg(2+) serves as cofactor.

It is found in the cytoplasm. The enzyme catalyses Endonucleolytic cleavage to 5'-phosphomonoester.. In terms of biological role, endonuclease that specifically degrades the RNA of RNA-DNA hybrids. This Escherichia coli (strain 55989 / EAEC) protein is Ribonuclease H.